The chain runs to 578 residues: Proline--tRNA ligase (578 aa).

Belongs to the class-II aminoacyl-tRNA synthetase family. ProS type 1 subfamily. As to quaternary structure, homodimer.

The protein localises to the cytoplasm. The catalysed reaction is tRNA(Pro) + L-proline + ATP = L-prolyl-tRNA(Pro) + AMP + diphosphate. Functionally, catalyzes the attachment of proline to tRNA(Pro) in a two-step reaction: proline is first activated by ATP to form Pro-AMP and then transferred to the acceptor end of tRNA(Pro). As ProRS can inadvertently accommodate and process non-cognate amino acids such as alanine and cysteine, to avoid such errors it has two additional distinct editing activities against alanine. One activity is designated as 'pretransfer' editing and involves the tRNA(Pro)-independent hydrolysis of activated Ala-AMP. The other activity is designated 'posttransfer' editing and involves deacylation of mischarged Ala-tRNA(Pro). The misacylated Cys-tRNA(Pro) is not edited by ProRS. The protein is Proline--tRNA ligase of Syntrophus aciditrophicus (strain SB).